A 2176-amino-acid chain; its full sequence is MDPNNLQNSLNGTGNPNFQPVQTNAGGFGHQMAQTGAAAAAAATGQYNPMLLQQQYLNFGFGMNYNNQLFDFQAQQQQQQQYLMQQQQQQQQLHHQQQQQHQNIAQPQAQHHQMNMFTQHQMLQLMQQQQQQQQQQPVQQIQRQQPIAQPIPQHTIPPSTSNQFQQQIQSAASSIFDSSVISSHQKLYEEQCRQIEKERKEQEERKRKQELEEQRKRNEELKRLRIAEEKRLLEEQQRLREQMERERLAEIKRLEEAARLEDERRIAADIEAQKQAMLQKMQAEQNKHIAEVERQRSELEERFARVSQPMTLVGTHFLPNFLDMIPFPYESMVDSTLPQVFDMERDSAILESCDPQMVATISNILNATNIDDIITRMDKLRPDDKETNDLFLDKLPPIIQAVVNYNTSALDVDSHNDMELLENEDVMMTEDITRTTAPSTSSSSYNNHHQNSIVMMTSSSVSMSEATQSSSVTMNHHDVDEEGPAPISIEKRRQMMSVGKAPKAGGGGGQNQRKKRDMVENLYDSLTDNFVPTDTGRRGRRRGRGSDDDEDELLQRDLKLIEEMEKGVKLPASVTGFTTTEEDVQHFFGSQKKRRKEDRIRKDRSPTPEDVIESRDAEWQERLRLKMEREKSRKADEESQNAWSLQALADNETFTRFCQTVDGVLEQGDSLDTELKMPKNKKRRSGGDHHHKGDENSDESDEEEEMDEIDPDLRIELYILEELRRGSARLRENHALQAVGADKLLKLVAMLDRNIRDAISADNQRLLVPCDDDVDVGDVLEKEICEERVKRASDAAVVALNIMSSHRMHKQVIIEDVIDRCVGLTRLLLIHLIYPASDSIYKSVNSKKKDRAPEEARRRKKAGVCTRDKFSEYIYERITEAIGLLAVLVKSESMTDTSVHNVASVALTPFFVANVGSLQITAMLLASNIFSRAEDSLRFSMITDLLSSLHRAPQFTQKNSNNGYSLPDGSWISTTTALFIQLVQSTIKIPKFKKHADEDELAKRSKKEEAMVKEGFLKASKVTNAFLNGFLAKCSQKGNKMDGEEDYRILFSNFLQELLSALYSPEWPAAEMILTALGSLLVKNFRSKSSDMTIRQASLDYLGNITAKLRKDQKEAIAGERRLDAVVKKSFLLLSDKGVEDYESVDISNLKQNDKLKVLETSLIDYLVITNSSDIIVYACNFYVGEWYKEVAEDLESARSKLKQTVDTNESEKDVKKAERKYEKIQYRGAEMKVFLSKILDKKEIKRRLEKSNKVKMLDSDAFWAVKFLAQSREFTHSFDTYLKHIVFGAGSETIVALRSKALKCLSSIIEADSSVLILEDVQQAVHTRMVDSHAQVRESAVELIGRFVLYDEEYVRKYYSQIAERILDTGVAVRKRVIRIMREICEKFPTFEMIPDMLARMIRRVTDEEGVKKLVFETFTTLWFQPVDTRIYTNAVATKVTTMCSVAQHCIKDAMSDYLEQLILHIVKNGQEGSGMSVAVKQIIDSLVDHILNLEQHKSSENVSEVELMRRKEQEEKYMAYLSTLAVFSKIRPLLLTSHVEVLLPYLTFSGAKTNAENQVTKEMIGMLERVIPLVPFPSNIVLDSIDENLCKVIMFNGMALVVSAVSCVASIYKKFKRGATKTIDVFSTYLKHLEVIKRNFDSNPRYDLDPKLFPILSRSIFTLGVLSRYFQFEEFVKEDPTEEKVEALKEKVFITLEFFSRYHKGGLRQKALTAMGHFCAQHSTYLTKRQLTNTYLEILNAANSPQQQQQRILVLQNLEMFLQCEEQKLAASHDKWDENKEAQNLKEMELSGSGLGSSVIQKYWKAVLESYVDADIQLRRAAVQVVWLTLNQGLVTPGASIPTLIAMTTDPVDVIRNRIDILLKEIDSKYSGMVQSKAMQGVRLSYKLHLKLRMLQQEKFVRGFRFCDFHLNTLPNALPEKTHDGMAVLSGLYQSLRTNRQQRRSFLQSMVKLFSEEFSHDKPQLMEYIFIADNLAMFPYQMIDEPLYVMRQIDQNIAQTGQSLLVQYKLQLRMQESEDEDIVFLDENMMSRLSQLGQIETFHQLFLDSQVPSLLLYVRTFLMQLYGFNETKVAEYQPSEAAKVYEKAVTRRNIHMFKPITALEALNFPFEWGSFQHTAFLAEKICSFRKMLLSLDQVEEVEVSNTITAANDDYDEEEDGGEDSRGPIMEQMEH.

Residues 1-25 (MDPNNLQNSLNGTGNPNFQPVQTNA) are compositionally biased toward polar residues. Disordered regions lie at residues 1 to 27 (MDPN…NAGG), 150 to 170 (PIPQ…QIQS), 464 to 483 (SEAT…DEEG), 495 to 514 (MMSV…NQRK), 523 to 551 (YDSL…DDED), 585 to 615 (QHFF…IESR), and 669 to 708 (DSLD…EMDE). Low complexity predominate over residues 464 to 473 (SEATQSSSVT). Basic and acidic residues-rich tracts occupy residues 597 to 615 (EDRI…IESR) and 685 to 695 (SGGDHHHKGDE). Residues 696–708 (NSDESDEEEEMDE) show a composition bias toward acidic residues. HEAT repeat units lie at residues 1280 to 1312 (DTYL…IIEA), 1320 to 1351 (EDVQ…FVLY), 1353 to 1388 (EEYV…ICEK), 1393 to 1426 (EMIP…LWFQ), 1692 to 1723 (EKVF…FCAQ), 1803 to 1834 (QKYW…TLNQ), and 1840 to 1871 (GASI…IDSK). The interval 2149–2176 (ITAANDDYDEEEDGGEDSRGPIMEQMEH) is disordered. Positions 2154–2163 (DDYDEEEDGG) are enriched in acidic residues.

This sequence belongs to the SCC2/Nipped-B family. As to quaternary structure, may heterodimerize with mau-2/SCC4 to form the cohesin loading complex.

The protein localises to the nucleus. The protein resides in the chromosome. Its function is as follows. Plays an important role in the loading of the cohesin complex on to meiotic chromosomes. Forms a heterodimeric complex (also known as cohesin loading complex) with mau-2/SCC4 which mediates the loading of the cohesin complex onto chromatin. Plays an essential role in cell division during embryonic development. Promotes normal chromosome organization during meiosis. Required for the assembly of the synaptonemal complex between homologous chromosomes to promote sister chromatid cohesion during meiosis. Required for chromosome segregation during mitosis and meiosis. Plays a role in DNA double-strand break (DSB) repair during meiotic recombination and promotes the assembly of the 9-1-1 cell-cycle checkpoint response complex which is required for inducing apoptosis in response to DNA damage, at DNA damage sites. The polypeptide is Nipped-B-like protein scc-2 (Caenorhabditis elegans).